The following is a 470-amino-acid chain: L-fuculokinase (470 aa).

It belongs to the FGGY kinase family. The cofactor is a divalent metal cation.

The catalysed reaction is L-fuculose + ATP = L-fuculose 1-phosphate + ADP + H(+). It participates in carbohydrate degradation; L-fucose degradation; L-lactaldehyde and glycerone phosphate from L-fucose: step 2/3. Its function is as follows. Catalyzes the phosphorylation of L-fuculose. This Haemophilus influenzae (strain ATCC 51907 / DSM 11121 / KW20 / Rd) protein is L-fuculokinase.